Reading from the N-terminus, the 124-residue chain is Nucleoid-associated protein Noca_0318 (124 aa).

It belongs to the YbaB/EbfC family. Homodimer.

It localises to the cytoplasm. It is found in the nucleoid. Functionally, binds to DNA and alters its conformation. May be involved in regulation of gene expression, nucleoid organization and DNA protection. The protein is Nucleoid-associated protein Noca_0318 of Nocardioides sp. (strain ATCC BAA-499 / JS614).